The sequence spans 705 residues: Elongation factor G 2 (705 aa).

Residues 8-290 (ELYRNIGISA…AVLDYLPSPL (283 aa)) form the tr-type G domain. GTP is bound by residues 17 to 24 (AHIDAGKT), 88 to 92 (DTPGH), and 142 to 145 (NKMD).

It belongs to the TRAFAC class translation factor GTPase superfamily. Classic translation factor GTPase family. EF-G/EF-2 subfamily.

The protein localises to the cytoplasm. Functionally, catalyzes the GTP-dependent ribosomal translocation step during translation elongation. During this step, the ribosome changes from the pre-translocational (PRE) to the post-translocational (POST) state as the newly formed A-site-bound peptidyl-tRNA and P-site-bound deacylated tRNA move to the P and E sites, respectively. Catalyzes the coordinated movement of the two tRNA molecules, the mRNA and conformational changes in the ribosome. The protein is Elongation factor G 2 of Bordetella avium (strain 197N).